Here is a 443-residue protein sequence, read N- to C-terminus: 3-phosphoshikimate 1-carboxyvinyltransferase (443 aa).

Positions 24, 25, and 29 each coordinate 3-phosphoshikimate. K24 is a phosphoenolpyruvate binding site. Phosphoenolpyruvate-binding residues include G95 and R123. 3-phosphoshikimate contacts are provided by S167, Q169, D323, and K350. Position 169 (Q169) interacts with phosphoenolpyruvate. D323 acts as the Proton acceptor in catalysis. 2 residues coordinate phosphoenolpyruvate: R354 and R398.

This sequence belongs to the EPSP synthase family. In terms of assembly, monomer.

It is found in the cytoplasm. The enzyme catalyses 3-phosphoshikimate + phosphoenolpyruvate = 5-O-(1-carboxyvinyl)-3-phosphoshikimate + phosphate. Its pathway is metabolic intermediate biosynthesis; chorismate biosynthesis; chorismate from D-erythrose 4-phosphate and phosphoenolpyruvate: step 6/7. Catalyzes the transfer of the enolpyruvyl moiety of phosphoenolpyruvate (PEP) to the 5-hydroxyl of shikimate-3-phosphate (S3P) to produce enolpyruvyl shikimate-3-phosphate and inorganic phosphate. The sequence is that of 3-phosphoshikimate 1-carboxyvinyltransferase from Caulobacter vibrioides (strain ATCC 19089 / CIP 103742 / CB 15) (Caulobacter crescentus).